The chain runs to 485 residues: MKRSFLSLAVAAVVLSGCSLIPDYQRPEAPVAAAYPQGQAYGQNTGAAAVPAADIGWREFFRDPQLQQLIGVALENNRDLRVAALNVEAFRAQYRIQRADLFPRIGVDGSGTRQRLPGDLSTTGSPAISSQYGVTLGTTAWELDLFGRLRSLRDQALEQYLATEQAQRSAQTTLVASVATAYLTLKADQAQLQLTKDTLGTYQKSFDLTQRSYDVGVASALDLRQAQTAVEGARATLAQYTRLVAQDQNALVLLLGSGIPANLPQGLGLDQTLLTEVPAGLPSDLLQRRPDILEAEHQLMAANASIGAARAAFFPSISLTANAGTMSRQLSGLFDAGSGSWLFQPSINLPIFTAGSLRASLDYAKIQKDINVAQYEKAIQTAFQEVADGLAARGTFTEQLQAQRDLVKASDEYYQLADKRYRTGVDNYLTLLDAQRSLFTAQQQLITDRLNQLTSEVNLYKALGGGWNQQTVTQQQTAKKEDPQA.

An N-terminal signal peptide occupies residues 1–17; it reads MKRSFLSLAVAAVVLSG. C18 is lipidated: N-palmitoyl cysteine. A lipid anchor (S-diacylglycerol cysteine) is attached at C18.

This sequence belongs to the outer membrane factor (OMF) (TC 1.B.17) family. As to quaternary structure, component of the MexAB-OprM multidrug efflux complex, composed of six MexA subunits forming a hexameric tube, binding to a MexB trimer, which interact with the trimeric OprM outer membrane channel protein. The OprM homotrimer forms a 135 Angstroms-long pore. It consists of a beta-barrel, which is probably inserted in the outer membrane, and an alpha-barrel formed by alpha-helices which probably spans the periplasm. In the ground state the periplasmic end is closed, while the outer membrane end opening is 6-8 Angstroms in diameter. OprM does not directly contact MexB; instead, MexA joins MexB and OprM by forming a funnel-like hexamer anchored to the inner membrane. MexA may initially form a hexameric ring complex with MexB prior to OprM, then OprM undergoes a conformational change as it contacts MexA, allowing the periplasmic gate to open. It is thought that, under high intracellular substrate concentration, MexB ejects substrate into the tunnel formed by MexA-OprM; as the substrate level declines, conformational changes in MexB cause efflux to reduce and stop and the complex shifts to the closed state. MexB subunit acts as a substrate:proton antiporter and activity is enhanced significantly when in complex with MexA and OprM, in vitro.

It is found in the cell outer membrane. Its activity is regulated as follows. Export of antibiotics and solvents is dramatically decreased in the presence of the protonophore carbonyl cyanide m-chlorophenylhydrazone (CCCP), therefore may be driven by a proton gradient. Antibiotic efflux is inhibited by pyridopyrimidine derivatives, such as ABI-PP, acting by binding to a hydrophobic pocket in MexB. The outer membrane component of the MexAB-OprM efflux system that confers multidrug resistance. Functions as the major efflux pump for n-hexane and p-xylene efflux. Has been shown in one study to be involved in the active efflux of the autoinducer N-(3-oxododecanoyl) homoserine lactone, thereby playing an indirect role in quorum-sensing; but has been shown in another study not to be involved in efflux of this autoinducer. Over-expression of the pump increases antibiotic and solvent efflux capacities. Can replace the OprJ outer membrane component of the MexCD-OprJ pump; the antibiotics exported are those exported by the intact MexCD pump, showing that efflux substrate specificity is not conferred by this component. Serves as the outer membrane component for the MexXY efflux system. Implicated in the secretion of the siderophore pyoverdine. OprM is probably involved in the efflux of the siderophore across the outer membrane. This is Outer membrane protein OprM (oprM) from Pseudomonas aeruginosa (strain ATCC 15692 / DSM 22644 / CIP 104116 / JCM 14847 / LMG 12228 / 1C / PRS 101 / PAO1).